Here is a 191-residue protein sequence, read N- to C-terminus: Pyridoxal 5'-phosphate synthase subunit PdxT (191 aa).

G46–S48 lines the L-glutamine pocket. C78 serves as the catalytic Nucleophile. L-glutamine-binding positions include R105 and I134–R135. Active-site charge relay system residues include H170 and E172.

The protein belongs to the glutaminase PdxT/SNO family. In terms of assembly, in the presence of PdxS, forms a dodecamer of heterodimers. Only shows activity in the heterodimer.

It carries out the reaction aldehydo-D-ribose 5-phosphate + D-glyceraldehyde 3-phosphate + L-glutamine = pyridoxal 5'-phosphate + L-glutamate + phosphate + 3 H2O + H(+). The enzyme catalyses L-glutamine + H2O = L-glutamate + NH4(+). The protein operates within cofactor biosynthesis; pyridoxal 5'-phosphate biosynthesis. Catalyzes the hydrolysis of glutamine to glutamate and ammonia as part of the biosynthesis of pyridoxal 5'-phosphate. The resulting ammonia molecule is channeled to the active site of PdxS. The polypeptide is Pyridoxal 5'-phosphate synthase subunit PdxT (Carboxydothermus hydrogenoformans (strain ATCC BAA-161 / DSM 6008 / Z-2901)).